Consider the following 376-residue polypeptide: N-acetyldiaminopimelate deacetylase (376 aa).

The active site involves aspartate 69. Glutamate 128 acts as the Proton acceptor in catalysis.

This sequence belongs to the peptidase M20A family. N-acetyldiaminopimelate deacetylase subfamily.

The enzyme catalyses N-acetyl-(2S,6S)-2,6-diaminopimelate + H2O = (2S,6S)-2,6-diaminopimelate + acetate. The protein operates within amino-acid biosynthesis; L-lysine biosynthesis via DAP pathway; LL-2,6-diaminopimelate from (S)-tetrahydrodipicolinate (acetylase route): step 3/3. Catalyzes the conversion of N-acetyl-diaminopimelate to diaminopimelate and acetate. The polypeptide is N-acetyldiaminopimelate deacetylase (Bacillus mycoides (strain KBAB4) (Bacillus weihenstephanensis)).